A 345-amino-acid chain; its full sequence is Green-sensitive opsin (345 aa).

Residues 1-37 are Extracellular-facing; sequence MENGTEGKNFYIPMNNRTGLVRSPYEYPQYYLADPWQ. Asparagine 3 and asparagine 16 each carry an N-linked (GlcNAc...) asparagine glycan. A helical transmembrane segment spans residues 38-62; the sequence is FKLLGIYMFFLILTGFPINALTLVV. Residues 63–74 lie on the Cytoplasmic side of the membrane; sequence TAQNKKLRQPLN. Residues 75-100 form a helical membrane-spanning segment; the sequence is FILVNLAVAGLIMVCFGFTVCIYSCM. Topologically, residues 101-114 are extracellular; that stretch reads VGYFSLGPLGCTIE. A disulfide bond links cysteine 111 and cysteine 188. The chain crosses the membrane as a helical span at residues 115–134; that stretch reads GFMATLGGQVSLWSLVVLAI. Residues 135–153 lie on the Cytoplasmic side of the membrane; sequence ERYIVVCKPMGSFKFTATH. Residues 154 to 177 traverse the membrane as a helical segment; the sequence is SAAGCAFTWIMASSCAVPPLVGWS. The Extracellular segment spans residues 178 to 203; the sequence is RYIPEGIQVSCGPDYYTLAPGFNNES. N-linked (GlcNAc...) asparagine glycosylation occurs at asparagine 201. The helical transmembrane segment at 204–231 threads the bilayer; that stretch reads FVMYMFSCHFCVPVFTIFFTYGSLVMTV. Residues 232-253 are Cytoplasmic-facing; that stretch reads KAAAAQQQDSASTQKAEKEVTR. A helical membrane pass occupies residues 254-277; it reads MCFLMVLGFLLAWVPYASYAAWIF. At 278–285 the chain is on the extracellular side; the sequence is FNRGAAFS. The chain crosses the membrane as a helical span at residues 286-310; the sequence is AMSMAIPSFFSKSSALFNPIIYILL. Position 297 is an N6-(retinylidene)lysine (lysine 297). Over 311-345 the chain is Cytoplasmic; the sequence is NKQFRNCMLATIGMGGMVEDETSVSTSKTEVSTAA.

This sequence belongs to the G-protein coupled receptor 1 family. Opsin subfamily. Post-translationally, phosphorylated on some or all of the serine and threonine residues present in the C-terminal region. In terms of tissue distribution, the color pigments are found in the cone photoreceptor cells.

The protein resides in the membrane. Visual pigments are the light-absorbing molecules that mediate vision. They consist of an apoprotein, opsin, covalently linked to cis-retinal. This is Green-sensitive opsin from Oryzias latipes (Japanese rice fish).